We begin with the raw amino-acid sequence, 382 residues long: Probable protein phosphatase 2C 65 (382 aa).

The 291-residue stretch at 47 to 337 (HVSMSIKQGK…DDCAVVVLYL (291 aa)) folds into the PPM-type phosphatase domain. Mn(2+) is bound by residues Asp-83 and Gly-84. Positions 107–126 (KIRSSKSAGDENIENNSSQS) are disordered. Positions 282 and 328 each coordinate Mn(2+).

Belongs to the PP2C family. Mg(2+) is required as a cofactor. It depends on Mn(2+) as a cofactor.

It catalyses the reaction O-phospho-L-seryl-[protein] + H2O = L-seryl-[protein] + phosphate. The enzyme catalyses O-phospho-L-threonyl-[protein] + H2O = L-threonyl-[protein] + phosphate. The chain is Probable protein phosphatase 2C 65 from Arabidopsis thaliana (Mouse-ear cress).